The sequence spans 334 residues: Trans-1,2-dihydrobenzene-1,2-diol dehydrogenase (334 aa).

It belongs to the Gfo/Idh/MocA family. In terms of assembly, homodimer. In terms of tissue distribution, small intestine.

The catalysed reaction is (1R,2R)-1,2-dihydrobenzene-1,2-diol + NADP(+) = catechol + NADPH + H(+). It carries out the reaction D-xylose + NADP(+) = D-xylono-1,5-lactone + NADPH + H(+). The sequence is that of Trans-1,2-dihydrobenzene-1,2-diol dehydrogenase (DHDH) from Homo sapiens (Human).